A 159-amino-acid polypeptide reads, in one-letter code: Large ribosomal subunit protein uL22 (159 aa).

It belongs to the universal ribosomal protein uL22 family. In terms of assembly, part of the 50S ribosomal subunit.

Functionally, this protein binds specifically to 23S rRNA. It makes multiple contacts with different domains of the 23S rRNA in the assembled 50S subunit and ribosome. The globular domain of the protein is located near the polypeptide exit tunnel on the outside of the subunit, while an extended beta-hairpin is found that lines the wall of the exit tunnel in the center of the 70S ribosome. The sequence is that of Large ribosomal subunit protein uL22 from Methanopyrus kandleri (strain AV19 / DSM 6324 / JCM 9639 / NBRC 100938).